The chain runs to 117 residues: Large ribosomal subunit protein uL18 (117 aa).

Belongs to the universal ribosomal protein uL18 family. Part of the 50S ribosomal subunit; part of the 5S rRNA/L5/L18/L25 subcomplex. Contacts the 5S and 23S rRNAs.

This is one of the proteins that bind and probably mediate the attachment of the 5S RNA into the large ribosomal subunit, where it forms part of the central protuberance. The chain is Large ribosomal subunit protein uL18 from Phytoplasma australiense.